A 112-amino-acid chain; its full sequence is High mobility group protein D (112 aa).

The segment at residues 5 to 71 (PKRPLSAYML…DYDRAVKEFE (67 aa)) is a DNA-binding region (HMG box). At Ser-10 the chain carries Phosphoserine. Tyr-12 is modified (phosphotyrosine). The segment at 72-112 (ANGGSSAANGGGAKKRAKPAKKVAKKSKKEESDEDDDDESE) is disordered. The segment covering 84–98 (AKKRAKPAKKVAKKS) has biased composition (basic residues). A phosphoserine mark is found at Ser-103 and Ser-111. A compositionally biased stretch (acidic residues) spans 103 to 112 (SDEDDDDESE).

It belongs to the HMGB family.

It is found in the nucleus. Its subcellular location is the chromosome. Binds preferentially single-stranded DNA and unwinds double-stranded DNA. Prefers sites containing the sequence 5'-ttg-3'. Facilitates DNA bending. Associated with early embryonic chromatin in the absence of histone H1. This chain is High mobility group protein D (HmgD), found in Drosophila melanogaster (Fruit fly).